Reading from the N-terminus, the 468-residue chain is 3-isopropylmalate dehydratase large subunit (468 aa).

The [4Fe-4S] cluster site is built by Cys349, Cys409, and Cys412.

This sequence belongs to the aconitase/IPM isomerase family. LeuC type 1 subfamily. In terms of assembly, heterodimer of LeuC and LeuD. [4Fe-4S] cluster serves as cofactor.

The enzyme catalyses (2R,3S)-3-isopropylmalate = (2S)-2-isopropylmalate. It functions in the pathway amino-acid biosynthesis; L-leucine biosynthesis; L-leucine from 3-methyl-2-oxobutanoate: step 2/4. Catalyzes the isomerization between 2-isopropylmalate and 3-isopropylmalate, via the formation of 2-isopropylmaleate. This Nitrobacter winogradskyi (strain ATCC 25391 / DSM 10237 / CIP 104748 / NCIMB 11846 / Nb-255) protein is 3-isopropylmalate dehydratase large subunit.